The chain runs to 1670 residues: Collagen alpha-3(IV) chain (1670 aa).

Positions Met1 to Ser28 are cleaved as a signal peptide. Residues Lys29–Asp42 are 7S domain. A triple-helical region region spans residues Gly43–Pro1438. Disordered regions lie at residues Gly49 to Lys78, Leu167 to Lys469, and Gly502 to Thr1442. Over residues Pro176 to Pro200 the composition is skewed to pro residues. Residues Phe202–Arg212 are compositionally biased toward low complexity. Basic and acidic residues predominate over residues His217 to Val231. A compositionally biased stretch (low complexity) spans Gly242–Pro251. The N-linked (GlcNAc...) asparagine glycan is linked to Asn253. The span at Asn253–Ala266 shows a compositional bias: basic and acidic residues. Over residues Ser382–Pro394 the composition is skewed to low complexity. Positions Ser402–Lys411 are enriched in basic and acidic residues. Positions Gly415–Leu428 are enriched in low complexity. Pro residues-rich tracts occupy residues Pro429 to Pro438, Pro598 to Tyr618, and Val654 to Ile675. A Cell attachment site motif is present at residues Arg791 to Asp793. Positions Ile900–Pro909 are enriched in pro residues. The span at Val974–Pro987 shows a compositional bias: low complexity. The Cell attachment site signature appears at Arg996–Asp998. 3 stretches are compositionally biased toward low complexity: residues Ile1013–Ser1025, Leu1094–Ser1105, and His1118–Pro1133. A compositionally biased stretch (pro residues) spans Ile1135–Pro1148. Residues Arg1154–Asp1156 carry the Cell attachment site motif. 2 stretches are compositionally biased toward low complexity: residues Pro1230–Pro1250 and Pro1290–Thr1299. A Cell attachment site motif is present at residues Arg1306–Asp1308. Residues Pro1332–Pro1341 show a composition bias toward pro residues. 2 consecutive short sequence motifs (cell attachment site) follow at residues Arg1345 to Asp1347 and Arg1432 to Asp1434. The tract at residues Gly1427–Arg1444 is epitope recognized by Goodpasture antibodies. A Collagen IV NC1 domain is found at Gly1445–Arg1669. Disulfide bonds link Cys1460–Cys1551, Cys1493–Cys1548, Cys1505–Cys1511, Cys1570–Cys1665, Cys1604–Cys1662, and Cys1616–Cys1622. A required for the anti-angiogenic activity of tumstatin region spans residues Asn1479 to Ala1557. An S-Lysyl-methionine sulfilimine (Met-Lys) (interchain with K-1651) cross-link involves residue Met1533. A required for the anti-tumor cell activity of tumstatin region spans residues Ala1610 to Ser1628. An S-Lysyl-methionine sulfilimine (Lys-Met) (interchain with M-1533) cross-link involves residue Lys1651.

The protein belongs to the type IV collagen family. As to quaternary structure, there are six type IV collagen isoforms, alpha 1(IV)-alpha 6(IV), each of which can form a triple helix structure with 2 other chains to generate type IV collagen network. The alpha 3(IV) chain forms a triple helical protomer with alpha 4(IV) and alpha 5(IV); this triple helical structure dimerizes through NC1-NC1 domain interactions such that the alpha 3(IV), alpha 4(IV) and alpha 5(IV) chains of one protomer connect with the alpha 5(IV), alpha 4(IV) and alpha 3(IV) chains of the opposite promoter, respectively. Interacts with ITGB3. Associates with LAMB2 at the neuromuscular junction and in GBM. Prolines at the third position of the tripeptide repeating unit (G-X-Y) are hydroxylated in some or all of the chains. In terms of processing, isoform 2 contains an additional N-linked glycosylation site. Post-translationally, type IV collagens contain numerous cysteine residues which are involved in inter- and intramolecular disulfide bonding. 12 of these, located in the NC1 domain, are conserved in all known type IV collagens. The trimeric structure of the NC1 domains is stabilized by covalent bonds between Lys and Met residues. In terms of processing, phosphorylated. Thought to be phosphorylated by CERT, but CERT does not have kinase activity. In terms of tissue distribution, alpha 3 and alpha 4 type IV collagens are colocalized and present in kidney, eye, basement membranes of lens capsule, cochlea, lung, skeletal muscle, aorta, synaptic fibers, fetal kidney and fetal lung. PubMed:8083201 reports similar levels of expression of alpha 3 and alpha 4 type IV collagens in kidney, but PubMed:7523402 reports that in kidney levels of alpha 3 type IV collagen are significantly lower than those of alpha 4 type IV collagen. According to PubMed:8083201, alpha 3 type IV collagen is not detected in heart, brain, placenta, liver, pancreas, extrasynaptic muscle fibers, endoneurial and perineurial nerves, fetal brain, fetal heart and fetal liver. According to PubMed:7523402, alpha 3 type IV collagen is strongly expressed in pancreas, neuroretina and calvaria and not expressed in adrenal, ileum and skin. Isoform 1 and isoform 3 are strongly expressed in kidney, lung, suprarenal capsule, muscle and spleen, in each of these tissues isoform 1 is more abundant than isoform 3. Isoform 1 and isoform 3 are expressed at low levels in artery, fat, pericardium and peripherical nerve, but not in placenta, mesangium, skin, pleura and cultured umbilical endothelial cells.

It is found in the secreted. Its subcellular location is the extracellular space. It localises to the extracellular matrix. The protein localises to the basement membrane. Functionally, type IV collagen is the major structural component of glomerular basement membranes (GBM), forming a 'chicken-wire' meshwork together with laminins, proteoglycans and entactin/nidogen. Tumstatin, a cleavage fragment corresponding to the collagen alpha 3(IV) NC1 domain, possesses both anti-angiogenic and anti-tumor cell activity; these two anti-tumor properties may be regulated via RGD-independent ITGB3-mediated mechanisms. In Homo sapiens (Human), this protein is Collagen alpha-3(IV) chain (COL4A3).